Here is a 411-residue protein sequence, read N- to C-terminus: Arginine deiminase (411 aa).

Cys401 (amidino-cysteine intermediate) is an active-site residue.

Belongs to the arginine deiminase family.

The protein resides in the cytoplasm. The enzyme catalyses L-arginine + H2O = L-citrulline + NH4(+). Its pathway is amino-acid degradation; L-arginine degradation via ADI pathway; carbamoyl phosphate from L-arginine: step 1/2. This Staphylococcus epidermidis (strain ATCC 35984 / DSM 28319 / BCRC 17069 / CCUG 31568 / BM 3577 / RP62A) protein is Arginine deiminase.